We begin with the raw amino-acid sequence, 306 residues long: MASSCSRRLLAAALLPWCCAAWALGHLDPPSPPPLVIWHGMGDSCCNPMSMGVIKKMVEKEIPGIYVLSLEIGKNMMEDVENSFFLNVNVQVNMVCQILEKDPKLQQGYNAIGFSQGGQFLRAVAQRCPTPPMMTLISVGGQHQGVFGLPRCPGESSHICDFIRKSLNAGAYSKLVQERLVQAQYWHDPIKESVYRNYSIFLADINQERCVNESYKKNLMALKKFVMVKFFNDSIVDPVDSEWFGFYRSGQAKETIPLQESTLYTEDRLGLKKMDKAGKLVFLAKEGDHLQISKEWFTAHIIPFLK.

An N-terminal signal peptide occupies residues 1 to 27; it reads MASSCSRRLLAAALLPWCCAAWALGHL. Intrachain disulfides connect cysteine 45–cysteine 46, cysteine 96–cysteine 128, and cysteine 152–cysteine 160. Residue serine 115 is part of the active site. N-linked (GlcNAc...) asparagine glycans are attached at residues asparagine 197, asparagine 212, and asparagine 232. Residues aspartate 233 and histidine 289 contribute to the active site.

It belongs to the palmitoyl-protein thioesterase family. As to quaternary structure, interacts with CLN5, ATP5F1A and ATP5F1B. In terms of processing, glycosylated. In terms of tissue distribution, highest level in testis and kidney, lower in heart, brain and lung and lowest in skeletal muscle.

Its subcellular location is the lysosome. It is found in the secreted. The protein localises to the golgi apparatus. The protein resides in the endoplasmic reticulum. It catalyses the reaction S-hexadecanoyl-L-cysteinyl-[protein] + H2O = L-cysteinyl-[protein] + hexadecanoate + H(+). It carries out the reaction hexadecanoyl-CoA + H2O = hexadecanoate + CoA + H(+). The catalysed reaction is S-hexadecanoyl-N-acetylcysteamine + H2O = N-acetylcysteamine + hexadecanoate + H(+). The enzyme catalyses S-hexadecanoyl-N-acetylcysteine methyl ester + H2O = N-acetylcysteine methyl ester + hexadecanoate + H(+). Functionally, has thioesterase activity against fatty acid thioesters with 14 -18 carbons, including palmitoyl-CoA, S-palmitoyl-N-acetylcysteamine, and palmitoylated proteins. In contrast to PPT2, PPT1 can hydrolyze palmitoylated proteins and palmitoylcysteine. The chain is Palmitoyl-protein thioesterase 1 (Ppt1) from Mus musculus (Mouse).